Reading from the N-terminus, the 650-residue chain is ATP-dependent zinc metalloprotease FtsH (650 aa).

Residues 1–10 (MKTKKSKSTL) lie on the Cytoplasmic side of the membrane. The chain crosses the membrane as a helical span at residues 11 to 31 (WFWLIILLAIIVTIIIIAVTV). At 32-123 (KGTTQVISDA…LVYQGSVGMA (92 aa)) the chain is on the extracellular side. Residues 124-144 (LLVSLAPLLIYVLLFGGIIWF) traverse the membrane as a helical segment. At 145-650 (MMKSSSGAGA…DIKVEDLDID (506 aa)) the chain is on the cytoplasmic side. 217 to 224 (GPPGTGKT) lines the ATP pocket. Residue histidine 437 participates in Zn(2+) binding. Residue glutamate 438 is part of the active site. 2 residues coordinate Zn(2+): histidine 441 and aspartate 515.

The protein in the central section; belongs to the AAA ATPase family. It in the C-terminal section; belongs to the peptidase M41 family. Homohexamer. The cofactor is Zn(2+).

Its subcellular location is the cell membrane. Functionally, acts as a processive, ATP-dependent zinc metallopeptidase for both cytoplasmic and membrane proteins. Plays a role in the quality control of integral membrane proteins. This Mesoplasma florum (strain ATCC 33453 / NBRC 100688 / NCTC 11704 / L1) (Acholeplasma florum) protein is ATP-dependent zinc metalloprotease FtsH.